A 409-amino-acid chain; its full sequence is Indian hedgehog protein (409 aa).

The signal sequence occupies residues 1-23 (MQLPKVVLLLCAAALLLSGAVRG). Cys-24 is lipidated: N-palmitoyl cysteine. The Ca(2+) site is built by Glu-89, Glu-90, Asp-95, Thr-125, Glu-126, Asp-129, and Asp-131. Zn(2+) contacts are provided by His-140, Asp-147, and His-182. Gly-197 carries the Cholesterol glycine ester lipid modification.

This sequence belongs to the hedgehog family. As to quaternary structure, multimer. In terms of assembly, interacts with BOC and CDON. Interacts with PTCH1. Interacts with glypican GPC3. In terms of processing, cholesterylation is required for N-product targeting to lipid rafts and multimerization. The C-terminal domain displays an autoproteolysis activity and a cholesterol transferase activity. Both activities result in the cleavage of the full-length protein and covalent attachment of a cholesterol moiety to the C-terminal of the newly generated N-product. The N-product is the active species in both local and long-range signaling, whereas the C-product is degraded in the endoplasmic reticulum. Post-translationally, N-palmitoylation by HHAT of N-product is required for indian hedgehog protein N-product multimerization and full activity. As to expression, expressed in the marginal zone at early gastrulation. At stage 14, expression begins in the neural plate with expression becoming more prominent in the anterodorsal area at neural tube closure. At this stage, also expressed diffusely in the somitic and pre-somitic mesoderm. By the early tadpole (stages 28-30), expression is widespread throughout anterior structures with highest levels in the otic vesicle, the eye, and the branchial arches.

Its subcellular location is the cell membrane. It localises to the endoplasmic reticulum membrane. The protein resides in the golgi apparatus membrane. The protein localises to the secreted. It carries out the reaction glycyl-L-cysteinyl-[protein] + cholesterol + H(+) = [protein]-C-terminal glycyl cholesterol ester + N-terminal L-cysteinyl-[protein]. In terms of biological role, signal involved in the early induction and patterning of anterodorsal ectoderm, nervous system and somites. Induces ectopic cement gland formation in embryos. It is involved in the regulation of endochondral skeleton formation, and the development of retinal pigment epithelium (RPE), photoreceptors and periocular tissues. Its function is as follows. The C-terminal part of the indian hedgehog protein precursor displays an autoproteolysis and a cholesterol transferase activity. Both activities result in the cleavage of the full-length protein into two parts followed by the covalent attachment of a cholesterol moiety to the C-terminal of the newly generated N-product. Both activities occur in the endoplasmic reticulum. Functionally, the dually lipidated indian hedgehog protein N-product is a morphogen which is essential for a variety of patterning events during development. Binds to the patched (PTCH1) receptor, which functions in association with smoothened (SMO), to activate the transcription of target genes. Signal involved in the early induction and patterning of anterodorsal ectoderm, nervous system and somites. Induces ectopic cement gland formation in embryos. The sequence is that of Indian hedgehog protein from Xenopus laevis (African clawed frog).